A 360-amino-acid chain; its full sequence is Membrane-bound lytic murein transglycosylase C (360 aa).

A signal peptide spans 1-16 (MKKFFALALVAPLLIS). C17 is lipidated: N-palmitoyl cysteine. C17 is lipidated: S-diacylglycerol cysteine.

It belongs to the transglycosylase Slt family.

It is found in the cell outer membrane. The catalysed reaction is Exolytic cleavage of the (1-&gt;4)-beta-glycosidic linkage between N-acetylmuramic acid (MurNAc) and N-acetylglucosamine (GlcNAc) residues in peptidoglycan, from either the reducing or the non-reducing ends of the peptidoglycan chains, with concomitant formation of a 1,6-anhydrobond in the MurNAc residue.. Its function is as follows. Murein-degrading enzyme. May play a role in recycling of muropeptides during cell elongation and/or cell division. The chain is Membrane-bound lytic murein transglycosylase C from Citrobacter koseri (strain ATCC BAA-895 / CDC 4225-83 / SGSC4696).